The following is a 184-amino-acid chain: MNFKTVISLFLVLFVSFVYCENGAELLFHKKIVEGPVVGKELPIQFIIYNVGSEPAYDISFIDNDFSNAEFEFVSGSSEGKWETLAPNSQVQTNLTVIPKKSGIYSLTSTVLNYRKTQTSSEFTVSSAASYSGMYVESQADYEKRTSLLIKEWITFFVLCAGAIALPYSISTYYKKNYENGIKK.

Positions 1–20 (MNFKTVISLFLVLFVSFVYC) are cleaved as a signal peptide. Over 21-147 (ENGAELLFHK…SQADYEKRTS (127 aa)) the chain is Lumenal. Residue N94 is glycosylated (N-linked (GlcNAc...) asparagine). The chain crosses the membrane as a helical span at residues 148–168 (LLIKEWITFFVLCAGAIALPY). The Cytoplasmic portion of the chain corresponds to 169–184 (SISTYYKKNYENGIKK).

Belongs to the TRAP-beta family. In terms of assembly, heterotrimer of TRAP-alpha, TRAP-beta and TRAP-gamma.

The protein localises to the endoplasmic reticulum membrane. Functionally, TRAP proteins are part of a complex whose function is to bind calcium to the ER membrane and thereby regulate the retention of ER resident proteins. The chain is Translocon-associated protein subunit beta (ssr2) from Dictyostelium discoideum (Social amoeba).